The sequence spans 499 residues: UDP-N-acetylmuramoylalanine--D-glutamate ligase (499 aa).

120–126 (GTNGKTT) is an ATP binding site.

Belongs to the MurCDEF family.

It localises to the cytoplasm. The catalysed reaction is UDP-N-acetyl-alpha-D-muramoyl-L-alanine + D-glutamate + ATP = UDP-N-acetyl-alpha-D-muramoyl-L-alanyl-D-glutamate + ADP + phosphate + H(+). Its pathway is cell wall biogenesis; peptidoglycan biosynthesis. Cell wall formation. Catalyzes the addition of glutamate to the nucleotide precursor UDP-N-acetylmuramoyl-L-alanine (UMA). The sequence is that of UDP-N-acetylmuramoylalanine--D-glutamate ligase from Nostoc punctiforme (strain ATCC 29133 / PCC 73102).